A 298-amino-acid chain; its full sequence is Putative glycylpeptide N-tetradecanoyltransferase (298 aa).

The protein belongs to the NMT family.

It catalyses the reaction N-terminal glycyl-[protein] + tetradecanoyl-CoA = N-tetradecanoylglycyl-[protein] + CoA + H(+). Adds a myristoyl group to the N-terminal glycine residue of certain proteins. The protein is Putative glycylpeptide N-tetradecanoyltransferase of Melanoplus sanguinipes (Migratory grasshopper).